Here is a 320-residue protein sequence, read N- to C-terminus: PUP1 protein homolog (320 aa).

2 helical membrane passes run 66–85 (MWGG…AYRY) and 100–119 (FVLG…RSMY). The segment at 205 to 320 (GGVFNGSPFM…QSGRYGGNRS (116 aa)) is disordered. Residue serine 230 is modified to Phosphoserine. The span at 253 to 266 (GDNSSSSSWENIRN) shows a compositional bias: polar residues. Residues 267–284 (TSRDQSQESDASVDHESD) are compositionally biased toward basic and acidic residues.

It belongs to the PUP1 family.

Its subcellular location is the mitochondrion membrane. The sequence is that of PUP1 protein homolog from Saccharomyces cerevisiae (strain ATCC 204508 / S288c) (Baker's yeast).